Reading from the N-terminus, the 352-residue chain is MAVEALLLLSFGGPERPEDVMPFLENVTRGRGVPRARLEEVAQHYLHFGGVSPINALNRDIIAGVERELDEAGIDLPVYFGNRNWHPMVEDTVAEMARDGVTGALVFPTSAWGGYSGCRQYHEDIERARAAVGPAAPHLTKLRQYFDHPLLIEAFADAIRAALERLPADRRDRARLVFTAHSVPVAADAAAGPPADGGELYSRQVADAARLCAAATGFADHDLVWQSRSGPPQVPWLEPDIVDHLEDLAGRGVDAVVVCPVGFVSDHLEVIWDLDNEAKDKAAELGMAFARASTPGTDPRFPRLVVELMREHLDGLAPRRLGAEPGYGCTIDGMPCASGCCAPQRRPAAAGR.

Residues S52 and Y121 each contribute to the Fe-coproporphyrin III site. Positions 181 and 269 each coordinate Fe(2+).

This sequence belongs to the ferrochelatase family.

It localises to the cytoplasm. The enzyme catalyses Fe-coproporphyrin III + 2 H(+) = coproporphyrin III + Fe(2+). It functions in the pathway porphyrin-containing compound metabolism; protoheme biosynthesis. Its function is as follows. Involved in coproporphyrin-dependent heme b biosynthesis. Catalyzes the insertion of ferrous iron into coproporphyrin III to form Fe-coproporphyrin III. The sequence is that of Coproporphyrin III ferrochelatase from Nocardia farcinica (strain IFM 10152).